Here is a 346-residue protein sequence, read N- to C-terminus: Probable RNA methyltransferase PA1839 (346 aa).

The active-site Proton acceptor is glutamate 91. Residues 94-320 (LLPRGGLCVS…TKVRNSAGQD (227 aa)) enclose the Radical SAM core domain. Cysteine 101 and cysteine 325 are joined by a disulfide. The [4Fe-4S] cluster site is built by cysteine 108, cysteine 112, and cysteine 115. Residues 153 to 154 (GE), serine 183, 206 to 208 (SLH), and asparagine 282 contribute to the S-adenosyl-L-methionine site. Cysteine 325 functions as the S-methylcysteine intermediate in the catalytic mechanism.

This sequence belongs to the radical SAM superfamily. RlmN family. The cofactor is [4Fe-4S] cluster.

The protein localises to the cytoplasm. The polypeptide is Probable RNA methyltransferase PA1839 (Pseudomonas aeruginosa (strain ATCC 15692 / DSM 22644 / CIP 104116 / JCM 14847 / LMG 12228 / 1C / PRS 101 / PAO1)).